The primary structure comprises 124 residues: Fluoride-specific ion channel FluC (124 aa).

4 helical membrane passes run 5–25 (VYIALLGALGCLCRYFLSGLV), 32–52 (SFPYGTLAVNLIGAFLIGLVM), 67–87 (FAITIGFLGGLTTFSTFSFET), and 96–116 (LLIAFVNVLVSVVACLTCTWI). The Na(+) site is built by Gly75 and Thr78.

Belongs to the fluoride channel Fluc/FEX (TC 1.A.43) family.

The protein resides in the cell inner membrane. The enzyme catalyses fluoride(in) = fluoride(out). Its activity is regulated as follows. Na(+) is not transported, but it plays an essential structural role and its presence is essential for fluoride channel function. Its function is as follows. Fluoride-specific ion channel. Important for reducing fluoride concentration in the cell, thus reducing its toxicity. The sequence is that of Fluoride-specific ion channel FluC from Geobacter sp. (strain M21).